A 164-amino-acid chain; its full sequence is Superoxide dismutase [Cu-Zn] 3 (164 aa).

Histidine 51, histidine 53, and histidine 68 together coordinate Cu cation. Cysteine 62 and cysteine 151 are oxidised to a cystine. Residues histidine 68, histidine 76, histidine 85, and aspartate 88 each contribute to the Zn(2+) site. Residue histidine 125 coordinates Cu cation. A Peroxisome localization signal motif is present at residues 162-164 (AKL).

The protein belongs to the Cu-Zn superoxide dismutase family. As to quaternary structure, homodimer. Cu cation serves as cofactor. The cofactor is Zn(2+). As to expression, expressed in leaves (at protein level).

It is found in the peroxisome. The enzyme catalyses 2 superoxide + 2 H(+) = H2O2 + O2. In terms of biological role, destroys radicals which are normally produced within the cells and which are toxic to biological systems. The chain is Superoxide dismutase [Cu-Zn] 3 (CSD3) from Arabidopsis thaliana (Mouse-ear cress).